Consider the following 520-residue polypeptide: 2-isopropylmalate synthase (520 aa).

The Pyruvate carboxyltransferase domain occupies 12–274 (IRIFDTTLRD…DSAINTPRIV (263 aa)). Mn(2+) is bound by residues Asp21, His209, His211, and Asn245. The interval 396 to 520 (RLASMTISDV…VIAGKTAAVA (125 aa)) is regulatory domain.

This sequence belongs to the alpha-IPM synthase/homocitrate synthase family. LeuA type 1 subfamily. As to quaternary structure, homodimer. Mn(2+) serves as cofactor.

The protein resides in the cytoplasm. It carries out the reaction 3-methyl-2-oxobutanoate + acetyl-CoA + H2O = (2S)-2-isopropylmalate + CoA + H(+). It functions in the pathway amino-acid biosynthesis; L-leucine biosynthesis; L-leucine from 3-methyl-2-oxobutanoate: step 1/4. Functionally, catalyzes the condensation of the acetyl group of acetyl-CoA with 3-methyl-2-oxobutanoate (2-ketoisovalerate) to form 3-carboxy-3-hydroxy-4-methylpentanoate (2-isopropylmalate). This chain is 2-isopropylmalate synthase, found in Xanthomonas oryzae pv. oryzae (strain MAFF 311018).